The following is a 405-amino-acid chain: GTPase Obg (405 aa).

The Obg domain occupies 1-159 (MKFVDEVSIF…RDLKLELKVL (159 aa)). The interval 127 to 148 (NTRFKSSTNRAPRQTTPGKPGD) is disordered. Positions 129 to 143 (RFKSSTNRAPRQTTP) are enriched in polar residues. One can recognise an OBG-type G domain in the interval 160 to 333 (ADVGLLGLPN…LSQAIMRYLD (174 aa)). GTP-binding positions include 166–173 (GLPNAGKS), 191–195 (FTTLV), 213–216 (DIPG), 283–286 (NKAD), and 314–316 (SAL). Mg(2+)-binding residues include serine 173 and threonine 193. The interval 373–405 (LRRAGVKSVEEADDDDFDDDDDDEGGAEIIYVR) is disordered. Residues 383 to 398 (EADDDDFDDDDDDEGG) are compositionally biased toward acidic residues.

Belongs to the TRAFAC class OBG-HflX-like GTPase superfamily. OBG GTPase family. In terms of assembly, monomer. Mg(2+) serves as cofactor.

It localises to the cytoplasm. Its function is as follows. An essential GTPase which binds GTP, GDP and possibly (p)ppGpp with moderate affinity, with high nucleotide exchange rates and a fairly low GTP hydrolysis rate. Plays a role in control of the cell cycle, stress response, ribosome biogenesis and in those bacteria that undergo differentiation, in morphogenesis control. The chain is GTPase Obg from Stutzerimonas stutzeri (strain A1501) (Pseudomonas stutzeri).